A 186-amino-acid polypeptide reads, in one-letter code: Ribosome-recycling factor (186 aa).

The protein belongs to the RRF family.

The protein resides in the cytoplasm. Its function is as follows. Responsible for the release of ribosomes from messenger RNA at the termination of protein biosynthesis. May increase the efficiency of translation by recycling ribosomes from one round of translation to another. This chain is Ribosome-recycling factor, found in Cupriavidus pinatubonensis (strain JMP 134 / LMG 1197) (Cupriavidus necator (strain JMP 134)).